Here is a 544-residue protein sequence, read N- to C-terminus: MASKGKKNKVRTNSDLSNQVLLQYESLQKEHEKIKKECKKLQEERDEALRKLNEFESVSHRVIEEVNSIQENLEIEKTCRESVEALASKLNRQNLSLKRKSMLYMSRLAADVVAEISIDDEDDEDAHEEEAGVCSSSHCHIVITELRDKLEEILATKKQLMIDLETTREQLSKTRQELLKEKHDNTVLIAETFQQKKLLGKYNRVSQYALDEFESLQEDLKLERDLRSEAEKFAHEMLIEQKKLKRQSQVLVQSISVGEALQKALAEISTLTHTLEKQRLEHQQQVKGLEEQVNSSEVKKQLTALQRQTDLLEEERKEWQHKHTKAETEAKDLRFTVEELKKKLQQVSNPPTAAPAPPPPPPPPPPPPPPSSSSSNPLSSLLSILRKKKDVSTEIALVEKDSSEKSPEKDVRQQAVDEMMLRIKKGVQLRPVSQTTNRVRPGPKEPTASNSAIQELQGILNTVKRPGPSSSPGPRPPSPSEKSELEKALQRRREAVKSAKNNTNPSSVVDLTQIKQTRSEPGQNTGDQETLRHTTTTICTEQLS.

Coiled coils occupy residues 17–100 (SNQV…LKRK), 141–184 (IVIT…EKHD), and 259–349 (EALQ…QVSN). The tract at residues 343–544 (KLQQVSNPPT…TTTICTEQLS (202 aa)) is disordered. Pro residues predominate over residues 352–371 (TAAPAPPPPPPPPPPPPPPS). Over residues 372–383 (SSSSNPLSSLLS) the composition is skewed to low complexity. Over residues 397 to 412 (LVEKDSSEKSPEKDVR) the composition is skewed to basic and acidic residues. Residues 469-479 (SSSPGPRPPSP) are compositionally biased toward pro residues. Positions 480–504 (SEKSELEKALQRRREAVKSAKNNTN) form a coiled coil. The span at 481-497 (EKSELEKALQRRREAVK) shows a compositional bias: basic and acidic residues. Residues 499 to 544 (AKNNTNPSSVVDLTQIKQTRSEPGQNTGDQETLRHTTTTICTEQLS) show a composition bias toward polar residues.

The protein belongs to the shootin family.

It localises to the perikaryon. The protein localises to the cell projection. Its subcellular location is the axon. The protein resides in the growth cone. It is found in the cytoplasm. It localises to the cytoskeleton. The protein localises to the filopodium. Its subcellular location is the lamellipodium. Involved in the generation of internal asymmetric signals required for neuronal polarization and neurite outgrowth. The protein is Shootin-1 of Danio rerio (Zebrafish).